Reading from the N-terminus, the 1147-residue chain is Protein lin-41 (1147 aa).

A disordered region spans residues 1-93 (MATIVPCSLE…PPSMIQSPQQ (93 aa)). The segment covering 33–47 (SGNELSMGGSSSEGD) has biased composition (low complexity). Basic and acidic residues predominate over residues 48–65 (SMSHHRGEHSPNHHHQDN). Low complexity predominate over residues 84 to 93 (PPSMIQSPQQ). An RING-type zinc finger spans residues 114-155 (CSVCSKSSTIGVLPFVCAHKTCQSCYQMTPSSYDRRACKLCG). Residues 366-412 (MGPIQCQGCESKISFAYCMQCQEALCIHCVQAHQRVRATKQHAFVEL) form a B box-type; atypical zinc finger. Residues Cys371, Cys374, Cys394, and His398 each coordinate Zn(2+). Positions 565–618 (AFDTHVNALEERRKELLKRVETVKNLKLSVLISQAESLQSKQIDLQQAIQTATK) form a coiled coil. One copy of the Filamin repeat lies at 723-817 (ACGDLLSSSI…ISGCPTTMDI (95 aa)). NHL repeat units follow at residues 832–875 (ILTF…FDKD), 879–922 (ISKF…FDEN), 926–969 (LLKF…FTPQ), 974–1017 (RKCG…LSPR), 1022–1065 (MKVY…FASD), and 1107–1147 (SAPT…IRVF). Residues 1104–1123 (AFSSAPTPLTPSPRQLLDRP) form a disordered region.

This sequence belongs to the TRIM/RBCC family.

It localises to the cytoplasm. Its subcellular location is the P-body. Functionally, heterochronic protein which acts downstream of let-7 in temporal patterning. Plays a role in the developmental timing of postembryonic hypodermal seam cell division and fusion events and adult alae production. Represses lin-29 during late larval stages, which prevents terminal differentiation of hypodermal seam cells and promotes their division. Involved in post-transcriptional gene regulation, uses two independent pathways. Has direct and specific RNA-binding activity and, depending on the location (5'UTR or 3'UTR) of the target site, triggers either mRNA decay or repression of translation. Degrades the mRNA of transcription factor dmd-3 to govern the timing and extent of male tail tip morphogenesis. Plays a role in the sexual maturation of the nervous system. This is Protein lin-41 from Caenorhabditis elegans.